Reading from the N-terminus, the 273-residue chain is Putative pyruvate, phosphate dikinase regulatory protein (273 aa).

149-156 provides a ligand contact to ADP; sequence GPSRTSKT.

The protein belongs to the pyruvate, phosphate/water dikinase regulatory protein family. PDRP subfamily.

The enzyme catalyses N(tele)-phospho-L-histidyl/L-threonyl-[pyruvate, phosphate dikinase] + ADP = N(tele)-phospho-L-histidyl/O-phospho-L-threonyl-[pyruvate, phosphate dikinase] + AMP + H(+). It carries out the reaction N(tele)-phospho-L-histidyl/O-phospho-L-threonyl-[pyruvate, phosphate dikinase] + phosphate + H(+) = N(tele)-phospho-L-histidyl/L-threonyl-[pyruvate, phosphate dikinase] + diphosphate. In terms of biological role, bifunctional serine/threonine kinase and phosphorylase involved in the regulation of the pyruvate, phosphate dikinase (PPDK) by catalyzing its phosphorylation/dephosphorylation. The chain is Putative pyruvate, phosphate dikinase regulatory protein from Rickettsia bellii (strain OSU 85-389).